We begin with the raw amino-acid sequence, 462 residues long: Na(+)/H(+) antiporter NhaA (462 aa).

11 helical membrane passes run 24-44, 66-86, 102-122, 156-176, 196-216, 235-255, 256-275, 290-310, 312-332, 361-381, and 392-412; these read ISGLIMLGFALAGLVLANLPL, LPIGHWAQDGLLTIFFLTVGL, AAAVPMLCAVGGMITPPILFL, GWAVPTATDIAFSLAVLALFA, LLAIILIAVFFSSVNAWYWFI, PWIAVGVVGILAWIMMFEAGI, HPTLAGVLVGLLTPARVMHG, PFSALLALPIFALFATGVHFE, MSPLLLLSPLVIALIVALVVG, MIPAAVACGIGFTVSFLIASL, and ARFGVLVASLIAAAISGVLLS.

Belongs to the NhaA Na(+)/H(+) (TC 2.A.33) antiporter family.

The protein localises to the cell membrane. It carries out the reaction Na(+)(in) + 2 H(+)(out) = Na(+)(out) + 2 H(+)(in). In terms of biological role, na(+)/H(+) antiporter that extrudes sodium in exchange for external protons. This is Na(+)/H(+) antiporter NhaA from Bifidobacterium breve (strain NCIMB 8807 / UCC2003).